A 507-amino-acid polypeptide reads, in one-letter code: MSNPPVFTTSQGCPVSDPFTTQRIPLDSTGYKYAPPIGPLLLQDFKLIDTLSHFDRERIPERVVHAKGAGAYGVFEVTDDITDVCSAKFLDTVGKKTRIFTRFSTVGGEKGSADTARDPRGFATKFYTEDGNLDLVYNNTPIFFIRDPIKFPHFIHTQKRNPATNLKDPNMFWDYLTANDESLHQVMYLFSNRGTPASYRTMNGYSGHTYKWYNSKGEWVYVQVHFIANQGVHNLLDEEAGRLAGEDPDHSTRDLWEAIEKGDYPSWECYIQTMTLEQSKKLPFSVFDLTKVWPHKDFPLRHFGRFTLNENPKNYYAETEQIAFSPSHTVPGMEPSNDPVLQSRLFSYPDTHRHRLGPNYHQIPVNCPLKSGSFNPINRDGPMCVDGNLGGTPNYANAYNCPIQYAVSPKASGNKPDEKYTGEVVPYHWEHTDYDYFQPKMFWKVLGRTPGEQESLVKNVANHVSAADEFIQDRVYEYFSKAEPIIGDLIRKKVQELKRKASSPSKI.

Catalysis depends on residues histidine 65 and asparagine 138. Tyrosine 348 contributes to the heme binding site. The Microbody targeting signal signature appears at serine 505–isoleucine 507.

This sequence belongs to the catalase family. Homotetramer. Heme is required as a cofactor.

The protein localises to the peroxisome matrix. The catalysed reaction is 2 H2O2 = O2 + 2 H2O. Catalyzes the degradation of hydrogen peroxide (H(2)O(2)) generated by peroxisomal oxidases to water and oxygen, thereby protecting cells from the toxic effects of hydrogen peroxide. The polypeptide is Peroxisomal catalase (PXP9) (Pichia angusta (Yeast)).